The sequence spans 246 residues: 3-deoxy-manno-octulosonate cytidylyltransferase (246 aa).

Belongs to the KdsB family. As to quaternary structure, homodimer.

It is found in the cytoplasm. It catalyses the reaction 3-deoxy-alpha-D-manno-oct-2-ulosonate + CTP = CMP-3-deoxy-beta-D-manno-octulosonate + diphosphate. The protein operates within nucleotide-sugar biosynthesis; CMP-3-deoxy-D-manno-octulosonate biosynthesis; CMP-3-deoxy-D-manno-octulosonate from 3-deoxy-D-manno-octulosonate and CTP: step 1/1. It participates in bacterial outer membrane biogenesis; lipopolysaccharide biosynthesis. Functionally, activates KDO (a required 8-carbon sugar) for incorporation into bacterial lipopolysaccharide in Gram-negative bacteria. The protein is 3-deoxy-manno-octulosonate cytidylyltransferase (kpsU) of Escherichia coli.